The following is a 567-amino-acid chain: 2-succinyl-5-enolpyruvyl-6-hydroxy-3-cyclohexene-1-carboxylate synthase (567 aa).

This sequence belongs to the TPP enzyme family. MenD subfamily. Homodimer. Mg(2+) is required as a cofactor. The cofactor is Mn(2+). Requires thiamine diphosphate as cofactor.

The enzyme catalyses isochorismate + 2-oxoglutarate + H(+) = 5-enolpyruvoyl-6-hydroxy-2-succinyl-cyclohex-3-ene-1-carboxylate + CO2. The protein operates within quinol/quinone metabolism; 1,4-dihydroxy-2-naphthoate biosynthesis; 1,4-dihydroxy-2-naphthoate from chorismate: step 2/7. Its pathway is quinol/quinone metabolism; menaquinone biosynthesis. Catalyzes the thiamine diphosphate-dependent decarboxylation of 2-oxoglutarate and the subsequent addition of the resulting succinic semialdehyde-thiamine pyrophosphate anion to isochorismate to yield 2-succinyl-5-enolpyruvyl-6-hydroxy-3-cyclohexene-1-carboxylate (SEPHCHC). In Yersinia pseudotuberculosis serotype IB (strain PB1/+), this protein is 2-succinyl-5-enolpyruvyl-6-hydroxy-3-cyclohexene-1-carboxylate synthase.